We begin with the raw amino-acid sequence, 340 residues long: tRNA dimethylallyltransferase (340 aa).

The interval 1 to 25 is disordered; sequence MDQNRSPNGRDCREPPSPSSTARPG. An ATP-binding site is contributed by 31–38; the sequence is GPTATGKS. Residue 33–38 coordinates substrate; the sequence is TATGKS. Residues 56 to 59 are interaction with substrate tRNA; the sequence is DSRQ.

Belongs to the IPP transferase family. As to quaternary structure, monomer. Mg(2+) is required as a cofactor.

The enzyme catalyses adenosine(37) in tRNA + dimethylallyl diphosphate = N(6)-dimethylallyladenosine(37) in tRNA + diphosphate. Its function is as follows. Catalyzes the transfer of a dimethylallyl group onto the adenine at position 37 in tRNAs that read codons beginning with uridine, leading to the formation of N6-(dimethylallyl)adenosine (i(6)A). The chain is tRNA dimethylallyltransferase from Synechococcus sp. (strain JA-3-3Ab) (Cyanobacteria bacterium Yellowstone A-Prime).